The following is a 129-amino-acid chain: Small ribosomal subunit protein uS11 (129 aa).

This sequence belongs to the universal ribosomal protein uS11 family. As to quaternary structure, part of the 30S ribosomal subunit. Interacts with proteins S7 and S18. Binds to IF-3.

Functionally, located on the platform of the 30S subunit, it bridges several disparate RNA helices of the 16S rRNA. Forms part of the Shine-Dalgarno cleft in the 70S ribosome. The sequence is that of Small ribosomal subunit protein uS11 from Aromatoleum aromaticum (strain DSM 19018 / LMG 30748 / EbN1) (Azoarcus sp. (strain EbN1)).